The following is a 136-amino-acid chain: Nucleoside diphosphate kinase (136 aa).

K10, F58, R86, T92, R104, and N114 together coordinate ATP. H117 functions as the Pros-phosphohistidine intermediate in the catalytic mechanism.

The protein belongs to the NDK family. Homotetramer. The cofactor is Mg(2+).

It localises to the cytoplasm. The catalysed reaction is a 2'-deoxyribonucleoside 5'-diphosphate + ATP = a 2'-deoxyribonucleoside 5'-triphosphate + ADP. It carries out the reaction a ribonucleoside 5'-diphosphate + ATP = a ribonucleoside 5'-triphosphate + ADP. In terms of biological role, major role in the synthesis of nucleoside triphosphates other than ATP. The ATP gamma phosphate is transferred to the NDP beta phosphate via a ping-pong mechanism, using a phosphorylated active-site intermediate. The chain is Nucleoside diphosphate kinase from Mycolicibacterium paratuberculosis (strain ATCC BAA-968 / K-10) (Mycobacterium paratuberculosis).